Consider the following 464-residue polypeptide: 3-ketoacyl-CoA synthase 19 (464 aa).

Residues 3 to 25 traverse the membrane as a helical segment; the sequence is LFSLSSLLLLSTLFVFYIFKFVF. The region spanning 24 to 318 is the FAE domain; that stretch reads VFKRRNQRNC…AIVRALKRRT (295 aa). Residues C172, H251, H339, H343, H372, and N376 contribute to the active site.

The protein belongs to the thiolase-like superfamily. Chalcone/stilbene synthases family. Expressed in siliques.

The protein resides in the membrane. It catalyses the reaction a very-long-chain acyl-CoA + malonyl-CoA + H(+) = a very-long-chain 3-oxoacyl-CoA + CO2 + CoA. It functions in the pathway lipid metabolism; fatty acid biosynthesis. The protein is 3-ketoacyl-CoA synthase 19 of Arabidopsis thaliana (Mouse-ear cress).